The sequence spans 431 residues: 3-phosphoshikimate 1-carboxyvinyltransferase (431 aa).

3 residues coordinate 3-phosphoshikimate: lysine 22, serine 23, and arginine 27. Lysine 22 is a binding site for phosphoenolpyruvate. Positions 94 and 122 each coordinate phosphoenolpyruvate. Positions 167, 169, 315, and 342 each coordinate 3-phosphoshikimate. Glutamine 169 provides a ligand contact to phosphoenolpyruvate. The active-site Proton acceptor is aspartate 315. Arginine 346 and arginine 388 together coordinate phosphoenolpyruvate.

It belongs to the EPSP synthase family. As to quaternary structure, monomer.

Its subcellular location is the cytoplasm. It catalyses the reaction 3-phosphoshikimate + phosphoenolpyruvate = 5-O-(1-carboxyvinyl)-3-phosphoshikimate + phosphate. Its pathway is metabolic intermediate biosynthesis; chorismate biosynthesis; chorismate from D-erythrose 4-phosphate and phosphoenolpyruvate: step 6/7. Its function is as follows. Catalyzes the transfer of the enolpyruvyl moiety of phosphoenolpyruvate (PEP) to the 5-hydroxyl of shikimate-3-phosphate (S3P) to produce enolpyruvyl shikimate-3-phosphate and inorganic phosphate. This is 3-phosphoshikimate 1-carboxyvinyltransferase from Pelobacter propionicus (strain DSM 2379 / NBRC 103807 / OttBd1).